Here is a 359-residue protein sequence, read N- to C-terminus: 1-deoxy-D-xylulose 5-phosphate reductoisomerase (359 aa).

The NADPH site is built by Thr7, Gly8, Ser9, Ile10, Ala31, Asn33, and Asn111. Lys112 is a binding site for 1-deoxy-D-xylulose 5-phosphate. Residue Glu113 participates in NADPH binding. Residue Asp131 coordinates Mn(2+). 1-deoxy-D-xylulose 5-phosphate-binding residues include Ser132, Glu133, Ser155, and His178. Residue Glu133 coordinates Mn(2+). Gly184 contributes to the NADPH binding site. Residues Ser191, Asn196, Lys197, and Glu200 each contribute to the 1-deoxy-D-xylulose 5-phosphate site. Glu200 is a Mn(2+) binding site.

This sequence belongs to the DXR family. Mg(2+) is required as a cofactor. It depends on Mn(2+) as a cofactor.

It carries out the reaction 2-C-methyl-D-erythritol 4-phosphate + NADP(+) = 1-deoxy-D-xylulose 5-phosphate + NADPH + H(+). The protein operates within isoprenoid biosynthesis; isopentenyl diphosphate biosynthesis via DXP pathway; isopentenyl diphosphate from 1-deoxy-D-xylulose 5-phosphate: step 1/6. Its function is as follows. Catalyzes the NADPH-dependent rearrangement and reduction of 1-deoxy-D-xylulose-5-phosphate (DXP) to 2-C-methyl-D-erythritol 4-phosphate (MEP). The chain is 1-deoxy-D-xylulose 5-phosphate reductoisomerase from Campylobacter hominis (strain ATCC BAA-381 / DSM 21671 / CCUG 45161 / LMG 19568 / NCTC 13146 / CH001A).